We begin with the raw amino-acid sequence, 141 residues long: Hemoglobin subunit alpha (141 aa).

Residues 1–141 (VLSAEDKANV…VSTVLTSKYR (141 aa)) form the Globin domain. A Phosphoserine modification is found at Ser3. Residues Lys7 and Lys11 each carry the N6-succinyllysine modification. N6-acetyllysine; alternate is present on Lys16. Lys16 bears the N6-succinyllysine; alternate mark. A Phosphotyrosine modification is found at Tyr24. At Ser35 the chain carries Phosphoserine. Position 40 is an N6-succinyllysine (Lys40). Ser49 carries the post-translational modification Phosphoserine. His58 serves as a coordination point for O2. A heme b-binding site is contributed by His87. A Phosphoserine modification is found at Ser102. Residue Thr108 is modified to Phosphothreonine. A phosphoserine mark is found at Ser124 and Ser131. Residues Thr134 and Thr137 each carry the phosphothreonine modification. At Ser138 the chain carries Phosphoserine.

The protein belongs to the globin family. Heterotetramer of two alpha chains and two beta chains. In terms of tissue distribution, red blood cells.

Functionally, involved in oxygen transport from the lung to the various peripheral tissues. The polypeptide is Hemoglobin subunit alpha (Peromyscus crinitus (Canyon mouse)).